The chain runs to 595 residues: Inactive serine/threonine-protein kinase PLK5 (595 aa).

The region spanning 27-279 (YRRGKLIGKG…LDHLLQDDFF (253 aa)) is the Protein kinase domain. ATP is bound by residues 33-41 (IGKGAFSRC) and Lys-56. Residue Asp-150 is the Proton acceptor of the active site. Residues 326–350 (FTSKEASGPGEEGTEPDHMEAGNEE) form a disordered region. Positions 340–350 (EPDHMEAGNEE) are enriched in basic and acidic residues. POLO box domains lie at 413–491 (WAPK…YMQR) and 509–595 (DISL…LQSV).

Belongs to the protein kinase superfamily. Ser/Thr protein kinase family. CDC5/Polo subfamily. Expressed in the cerebellum, eye and brain cortex (at protein level). Expressed in highly differentiated tissues, such as brain, eyes and ovary. Not detectable in proliferating tissues, such as the colon, spleen and placenta.

The protein resides in the nucleus. It localises to the nucleolus. Its subcellular location is the cytoplasm. In terms of biological role, inactive serine/threonine-protein kinase that plays a role in cell cycle progression and neuronal differentiation. This chain is Inactive serine/threonine-protein kinase PLK5, found in Mus musculus (Mouse).